The chain runs to 362 residues: Vignain (362 aa).

Positions 1 to 20 are cleaved as a signal peptide; sequence MAMKKLLWVVLSLSLVLGVA. Positions 21 to 126 are cleaved as a propeptide — activation peptide; sequence NSFDFHEKDL…SGTFMYEKVG (106 aa). 3 disulfide bridges follow: cysteine 149–cysteine 191, cysteine 183–cysteine 224, and cysteine 282–cysteine 334. Cysteine 152 is a catalytic residue. Active-site residues include histidine 288 and asparagine 309. N-linked (GlcNAc...) asparagine glycosylation is found at asparagine 326 and asparagine 346. The propeptide at 353 to 362 is removed in mature form; sequence GSLSSPKDEL. The Prevents secretion from ER motif lies at 359–362; the sequence is KDEL.

Belongs to the peptidase C1 family. In terms of processing, the mature protein is not glycosylated. The precursor stored in the endoplasmic reticulum lumen is processed during the transport to proteins bodies to two dominant mature forms that differ by a single amino acid residue at the N-terminus.

The protein resides in the endoplasmic reticulum lumen. It localises to the vacuole. Its subcellular location is the aleurone grain. Functionally, thought to be involved in the hydrolysis of stored seed proteins. In vitro, catalyzes the hydrolysis of proteins, such as azocasein. Shows a preferential cleavage for Asn-|-Xaa in small molecule substrates such as Boc-Asn-|-OPHNO(2). The protein is Vignain of Vigna mungo (Black gram).